The sequence spans 200 residues: Peptidyl-tRNA hydrolase (200 aa).

Residue Tyr-15 participates in tRNA binding. His-20 functions as the Proton acceptor in the catalytic mechanism. Positions 66, 68, and 114 each coordinate tRNA.

The protein belongs to the PTH family. As to quaternary structure, monomer.

The protein resides in the cytoplasm. The enzyme catalyses an N-acyl-L-alpha-aminoacyl-tRNA + H2O = an N-acyl-L-amino acid + a tRNA + H(+). Hydrolyzes ribosome-free peptidyl-tRNAs (with 1 or more amino acids incorporated), which drop off the ribosome during protein synthesis, or as a result of ribosome stalling. In terms of biological role, catalyzes the release of premature peptidyl moieties from peptidyl-tRNA molecules trapped in stalled 50S ribosomal subunits, and thus maintains levels of free tRNAs and 50S ribosomes. The protein is Peptidyl-tRNA hydrolase of Ralstonia pickettii (strain 12J).